A 271-amino-acid chain; its full sequence is Elongation factor Ts (271 aa).

Positions 76 to 79 are involved in Mg(2+) ion dislocation from EF-Tu; sequence TDFV.

This sequence belongs to the EF-Ts family.

It is found in the cytoplasm. Functionally, associates with the EF-Tu.GDP complex and induces the exchange of GDP to GTP. It remains bound to the aminoacyl-tRNA.EF-Tu.GTP complex up to the GTP hydrolysis stage on the ribosome. This is Elongation factor Ts from Mycobacterium tuberculosis (strain ATCC 25177 / H37Ra).